The chain runs to 192 residues: Glycerol-3-phosphate acyltransferase (192 aa).

The next 5 membrane-spanning stretches (helical) occupy residues 5 to 25 (VVLILSYILGSIPFSLIITRI), 50 to 70 (FLAALALFLDSFKGFIAVYIA), 78 to 98 (DFYIYVSAILAVLGHMFPIWL), 112 to 132 (ILIAFNIDITLVFVIIWIIVF), and 153 to 173 (SFFFQRNLFLTLLIIGALVFL).

This sequence belongs to the PlsY family. As to quaternary structure, probably interacts with PlsX.

Its subcellular location is the cell membrane. It carries out the reaction an acyl phosphate + sn-glycerol 3-phosphate = a 1-acyl-sn-glycero-3-phosphate + phosphate. Its pathway is lipid metabolism; phospholipid metabolism. Its function is as follows. Catalyzes the transfer of an acyl group from acyl-phosphate (acyl-PO(4)) to glycerol-3-phosphate (G3P) to form lysophosphatidic acid (LPA). This enzyme utilizes acyl-phosphate as fatty acyl donor, but not acyl-CoA or acyl-ACP. In Wolbachia pipientis wMel, this protein is Glycerol-3-phosphate acyltransferase.